A 378-amino-acid chain; its full sequence is Secreted LysM effector ldpA (378 aa).

A signal peptide spans 1–19 (MMKSIRFLASALALCLVDA). Residues 118 to 131 (WTPPTTTTRSTSSS) are compositionally biased toward low complexity. The disordered stretch occupies residues 118–139 (WTPPTTTTRSTSSSAGNGVTTP). Positions 152-198 (RFYLVVSGDSCYDIAAAQGISLDNFYTWNPAVGSSCGGLWPDYYVCV) constitute a LysM 1 domain. Residues 208–230 (TTTTTTTPTTTSTTTTTAGNGVT) form a disordered region. LysM domains lie at 245–291 (KFYQ…YVCV) and 330–376 (KFYL…YVCV).

It belongs to the secreted LysM effector family.

It is found in the secreted. It localises to the cell wall. Its subcellular location is the extracellular space. The protein localises to the extracellular matrix. Cell wall chitin of A.fumigatus recruits lung eosinophils during infection and ldpA might have a role in sequestration of chitin and act as triggers of host immunity to dampen host defense. The protein is Secreted LysM effector ldpA of Aspergillus fumigatus (strain ATCC MYA-4609 / CBS 101355 / FGSC A1100 / Af293) (Neosartorya fumigata).